Consider the following 59-residue polypeptide: Movement protein TGBp3 (59 aa).

Over 1–3 (MHL) the chain is Lumenal. A helical membrane pass occupies residues 4–21 (AIVGALTLVLTLFVLHYT). Over 22–59 (TKDDRCYILINGHSAFTNCPASPDLAKVISQLKPHNHG) the chain is Cytoplasmic.

Belongs to the Tymovirales TGBp3 protein family.

It is found in the host endoplasmic reticulum membrane. Plays a role in viral cell-to-cell propagation, by facilitating genome transport to neighboring plant cells through plasmosdesmata. May induce the formation of granular vesicles derived from the Endoplasmic reticulum, which align on actin filaments. The sequence is that of Movement protein TGBp3 from Chenopodium album (Fat hen).